Here is a 342-residue protein sequence, read N- to C-terminus: Alanine racemase (342 aa).

The active-site Proton acceptor; specific for D-alanine is K33. K33 is modified (N6-(pyridoxal phosphate)lysine). R128 is a binding site for substrate. Y240 (proton acceptor; specific for L-alanine) is an active-site residue. Residue M288 participates in substrate binding.

It belongs to the alanine racemase family. It depends on pyridoxal 5'-phosphate as a cofactor.

It catalyses the reaction L-alanine = D-alanine. It participates in amino-acid biosynthesis; D-alanine biosynthesis; D-alanine from L-alanine: step 1/1. Catalyzes the interconversion of L-alanine and D-alanine. May also act on other amino acids. In Jannaschia sp. (strain CCS1), this protein is Alanine racemase (alr).